Consider the following 208-residue polypeptide: Ribosomal RNA large subunit methyltransferase E (208 aa).

The S-adenosyl-L-methionine site is built by Gly63, Trp65, Asp83, Asp99, and Asp124. Lys164 functions as the Proton acceptor in the catalytic mechanism.

The protein belongs to the class I-like SAM-binding methyltransferase superfamily. RNA methyltransferase RlmE family.

Its subcellular location is the cytoplasm. It catalyses the reaction uridine(2552) in 23S rRNA + S-adenosyl-L-methionine = 2'-O-methyluridine(2552) in 23S rRNA + S-adenosyl-L-homocysteine + H(+). Functionally, specifically methylates the uridine in position 2552 of 23S rRNA at the 2'-O position of the ribose in the fully assembled 50S ribosomal subunit. The protein is Ribosomal RNA large subunit methyltransferase E of Alcanivorax borkumensis (strain ATCC 700651 / DSM 11573 / NCIMB 13689 / SK2).